The primary structure comprises 106 residues: Small ribosomal subunit protein uS10 (106 aa).

Belongs to the universal ribosomal protein uS10 family. In terms of assembly, part of the 30S ribosomal subunit.

Its function is as follows. Involved in the binding of tRNA to the ribosomes. This Pyrobaculum calidifontis (strain DSM 21063 / JCM 11548 / VA1) protein is Small ribosomal subunit protein uS10.